The primary structure comprises 437 residues: Transcription factor TGAL5 (437 aa).

The tract at residues 33–75 (QEPYSNSQSVGSTTDSSSAQNTMSQAELVSPASMRSDSGQEQQ) is disordered. Low complexity predominate over residues 37 to 50 (SNSQSVGSTTDSSS). The segment covering 51-75 (AQNTMSQAELVSPASMRSDSGQEQQ) has biased composition (polar residues). The region spanning 126–170 (DAKTERRLAQNREAARKSRLRKKAYVQQLETSRIRLQQIEQELQR) is the bZIP domain. A basic motif region spans residues 128 to 148 (KTERRLAQNREAARKSRLRKK). Residues 154-168 (LETSRIRLQQIEQEL) are leucine-zipper. The DOG1 domain maps to 191–405 (AVMFDMDYTR…RALSSLWASR (215 aa)).

It belongs to the bZIP family. In terms of assembly, interacts with NPR5/NH4, NH5.1 and NH5.2.

The protein localises to the nucleus. Its function is as follows. Transcriptional regulator involved in defense response. This chain is Transcription factor TGAL5, found in Oryza sativa subsp. japonica (Rice).